Here is a 194-residue protein sequence, read N- to C-terminus: Peptidyl-tRNA hydrolase (194 aa).

H22 acts as the Proton acceptor in catalysis. Residues Y67, N69, and N115 each coordinate tRNA.

The protein belongs to the PTH family. In terms of assembly, monomer.

It is found in the cytoplasm. It catalyses the reaction an N-acyl-L-alpha-aminoacyl-tRNA + H2O = an N-acyl-L-amino acid + a tRNA + H(+). In terms of biological role, hydrolyzes ribosome-free peptidyl-tRNAs (with 1 or more amino acids incorporated), which drop off the ribosome during protein synthesis, or as a result of ribosome stalling. Catalyzes the release of premature peptidyl moieties from peptidyl-tRNA molecules trapped in stalled 50S ribosomal subunits, and thus maintains levels of free tRNAs and 50S ribosomes. This chain is Peptidyl-tRNA hydrolase, found in Granulibacter bethesdensis (strain ATCC BAA-1260 / CGDNIH1).